Consider the following 682-residue polypeptide: Penicillin-binding protein activator LpoA (682 aa).

The N-terminal stretch at 1-26 (MLSSITVRTKSGRLIPLVLAATLLAA) is a signal peptide. Cysteine 27 is lipidated: N-palmitoyl cysteine. Cysteine 27 is lipidated: S-diacylglycerol cysteine.

The protein belongs to the LpoA family. As to quaternary structure, interacts with PBP1a.

It is found in the cell outer membrane. Regulator of peptidoglycan synthesis that is essential for the function of penicillin-binding protein 1A (PBP1a). In Edwardsiella ictaluri (strain 93-146), this protein is Penicillin-binding protein activator LpoA.